The primary structure comprises 402 residues: UDP-N-acetylmuramoylalanine--D-glutamate ligase (402 aa).

97–103 (GTNGKTT) is an ATP binding site.

It belongs to the MurCDEF family.

It is found in the cytoplasm. It carries out the reaction UDP-N-acetyl-alpha-D-muramoyl-L-alanine + D-glutamate + ATP = UDP-N-acetyl-alpha-D-muramoyl-L-alanyl-D-glutamate + ADP + phosphate + H(+). It participates in cell wall biogenesis; peptidoglycan biosynthesis. Its function is as follows. Cell wall formation. Catalyzes the addition of glutamate to the nucleotide precursor UDP-N-acetylmuramoyl-L-alanine (UMA). This Campylobacter jejuni subsp. jejuni serotype O:6 (strain 81116 / NCTC 11828) protein is UDP-N-acetylmuramoylalanine--D-glutamate ligase.